A 207-amino-acid polypeptide reads, in one-letter code: MGGKWSKGCISGWPAVRERIRQTEPAAEGVGAVSQDLDRRGAVTINNIASNNADSAWLEAQEEEEEVGFPVRPQVPLRPMTYKGAFDLSHFLKEKGGLEGLIYSKKRQEILDLWVYNTQGYFPDWHNYTPGPGERYPLTFGWCFKLVPVDPQDVEKANEGENNSLLHPMCQHGIEDPEREVLMWKFDSRLALRHRAKELHPEFYKDC.

G2 carries the N-myristoyl glycine; by host lipid modification. At S6 the chain carries Phosphoserine; by host. The acidic; interacts with host PACS1 and PACS2; stabilizes the interaction of NEF/MHC-I with host AP1M1; necessary for MHC-I internalization stretch occupies residues 62 to 66; it reads EEEEE. Residues 70-79 form an SH3-binding; interaction with Src family tyrosine kinases region; that stretch reads PVRPQVPLRP. The short motif at 73 to 76 is the PxxP; stabilizes the interaction of NEF/MHC-I with host AP1M1; necessary for MHC-I internalization element; sequence PQVP. Residues 109 to 125 are mediates dimerization, Nef-PTE1 interaction; the sequence is EILDLWVYNTQGYFPDW. The tract at residues 149–181 is binding to ATP6V1H; sequence VDPQDVEKANEGENNSLLHPMCQHGIEDPEREV. The Dileucine internalization motif; necessary for CD4 internalization motif lies at 165 to 166; sequence LL. Positions 175–176 match the Diacidic; necessary for CD4 internalization motif; the sequence is ED.

Belongs to the lentivirus primate group Nef protein family. Monomer; cytosolic form. Homodimer; membrane bound form. Interacts with Nef associated p21-activated kinase (PAK2); this interaction activates PAK2. Associates with the Nef-MHC-I-AP1 complex; this complex is required for MHC-I internalization. Interacts (via C-terminus) with host PI3-kinase. Interacts with host PACS1; this interaction seems to be weak. Interacts with host PACS2. Interacts with host LCK and MAPK3; these interactions inhibit the kinase activity of the latter. Interacts with host ATP6V1H; this interaction may play a role in CD4 endocytosis. Associates with the CD4-Nef-AP2 complex; this complex is required for CD4 internalization. Interacts with host AP2 subunit alpha and AP2 subunit sigma2. Interacts with TCR-zeta chain; this interaction up-regulates the Fas ligand (FasL) surface expression. Interacts with host HCK, LYN, and SRC; these interactions activate the Src family kinases. Interacts with MAP3K5; this interaction inhibits the Fas and TNFR-mediated death signals. Interacts with beta-COP and PTE1. Interacts with human RACK1; this increases Nef phosphorylation by PKC. Interacts with TP53; this interaction decreases the half-life of TP53, protecting the infected cell against p53-mediated apoptosis. Post-translationally, the virion-associated Nef proteins are cleaved by the viral protease to release the soluble C-terminal core protein. Nef is probably cleaved concomitantly with viral structural proteins on maturation of virus particles. In terms of processing, myristoylated. Phosphorylated on serine residues, probably by host PKCdelta and theta.

The protein localises to the host cell membrane. It is found in the virion. The protein resides in the secreted. It localises to the host Golgi apparatus membrane. In terms of biological role, factor of infectivity and pathogenicity, required for optimal virus replication. Alters numerous pathways of T-lymphocyte function and down-regulates immunity surface molecules in order to evade host defense and increase viral infectivity. Alters the functionality of other immunity cells, like dendritic cells, monocytes/macrophages and NK cells. Its function is as follows. In infected CD4(+) T-lymphocytes, down-regulates the surface MHC-I, mature MHC-II, CD4, CD28, CCR5 and CXCR4 molecules. Mediates internalization and degradation of host CD4 through the interaction of with the cytoplasmic tail of CD4, the recruitment of AP-2 (clathrin adapter protein complex 2), internalization through clathrin coated pits, and subsequent transport to endosomes and lysosomes for degradation. Diverts host MHC-I molecules to the trans-Golgi network-associated endosomal compartments by an endocytic pathway to finally target them for degradation. MHC-I down-regulation may involve AP-1 (clathrin adapter protein complex 1) or possibly Src family kinase-ZAP70/Syk-PI3K cascade recruited by PACS2. In consequence infected cells are masked for immune recognition by cytotoxic T-lymphocytes. Decreasing the number of immune receptors also prevents reinfection by more HIV particles (superinfection). Down-regulates host SERINC3 and SERINC5 thereby excluding these proteins from the viral particles. Virion infectivity is drastically higher when SERINC3 or SERINC5 are excluded from the viral envelope, because these host antiviral proteins impair the membrane fusion event necessary for subsequent virion penetration. Bypasses host T-cell signaling by inducing a transcriptional program nearly identical to that of anti-CD3 cell activation. Interaction with TCR-zeta chain up-regulates the Fas ligand (FasL). Increasing surface FasL molecules and decreasing surface MHC-I molecules on infected CD4(+) cells send attacking cytotoxic CD8+ T-lymphocytes into apoptosis. Functionally, plays a role in optimizing the host cell environment for viral replication without causing cell death by apoptosis. Protects the infected cells from apoptosis in order to keep them alive until the next virus generation is ready to strike. Inhibits the Fas and TNFR-mediated death signals by blocking MAP3K5/ASK1. Decreases the half-life of TP53, protecting the infected cell against p53-mediated apoptosis. Inhibits the apoptotic signals regulated by the Bcl-2 family proteins through the formation of a Nef/PI3-kinase/PAK2 complex that leads to activation of PAK2 and induces phosphorylation of host BAD. In terms of biological role, extracellular Nef protein targets CD4(+) T-lymphocytes for apoptosis by interacting with CXCR4 surface receptors. In Homo sapiens (Human), this protein is Protein Nef.